A 342-amino-acid polypeptide reads, in one-letter code: Glucokinase (342 aa).

An ATP-binding site is contributed by 15–20 (GDVGGT).

Belongs to the bacterial glucokinase family.

Its subcellular location is the cytoplasm. The catalysed reaction is D-glucose + ATP = D-glucose 6-phosphate + ADP + H(+). The polypeptide is Glucokinase (Ralstonia nicotianae (strain ATCC BAA-1114 / GMI1000) (Ralstonia solanacearum)).